Consider the following 129-residue polypeptide: UPF0344 protein SSP1805 (129 aa).

4 helical membrane passes run Met1–Phe21, Ile36–Ile56, Met68–Ile88, and Leu100–Met120.

It belongs to the UPF0344 family.

It is found in the cell membrane. The polypeptide is UPF0344 protein SSP1805 (Staphylococcus saprophyticus subsp. saprophyticus (strain ATCC 15305 / DSM 20229 / NCIMB 8711 / NCTC 7292 / S-41)).